Consider the following 142-residue polypeptide: Large ribosomal subunit protein uL13 (142 aa).

It belongs to the universal ribosomal protein uL13 family. In terms of assembly, part of the 50S ribosomal subunit.

Its function is as follows. This protein is one of the early assembly proteins of the 50S ribosomal subunit, although it is not seen to bind rRNA by itself. It is important during the early stages of 50S assembly. This is Large ribosomal subunit protein uL13 from Pseudomonas aeruginosa (strain LESB58).